A 106-amino-acid chain; its full sequence is Probable glutaredoxin (106 aa).

The Glutaredoxin domain occupies 8–106 (IVQKITGADP…AKYLDVQFTQ (99 aa)). A disulfide bond links Cys-28 and Cys-31.

This sequence belongs to the glutaredoxin family.

The protein resides in the virion. The polypeptide is Probable glutaredoxin (Acanthamoeba polyphaga mimivirus (APMV)).